A 469-amino-acid polypeptide reads, in one-letter code: Diacetylchitobiose binding protein NgcE (469 aa).

Positions 1-37 (MTIRAGSLDRRTLLRGAIATAAMGSFAVACSSPSSED) form a signal peptide, tat-type signal. The segment at 30 to 54 (CSSPSSEDKESDSGPKGEKSANNPF) is disordered. A compositionally biased stretch (basic and acidic residues) spans 35–48 (SEDKESDSGPKGEK).

This sequence belongs to the bacterial solute-binding protein 1 family. In terms of assembly, the complex is composed of two ATP-binding proteins (MsiK), two transmembrane proteins (NgcF and NgcG) and a solute-binding protein (NgcE). Post-translationally, predicted to be exported by the Tat system. The position of the signal peptide cleavage has not been experimentally proven.

It is found in the cell membrane. In terms of biological role, part of the ABC transporter complex NgcEFG-MsiK involved in N,N'-diacetylchitobiose ((GlcNAc)2) uptake. Binds (GlcNAc)2. Can also bind GlcNAc. This chain is Diacetylchitobiose binding protein NgcE, found in Streptomyces coelicolor (strain ATCC BAA-471 / A3(2) / M145).